The sequence spans 262 residues: Tritrans,polycis-undecaprenyl-diphosphate synthase (geranylgeranyl-diphosphate specific) (262 aa).

Residue Asp40 is part of the active site. Asp40 contacts Mg(2+). Substrate contacts are provided by residues 41–44, Trp45, and 85–87; these read GNRR and STE. Asn88 (proton acceptor) is an active-site residue. Substrate is bound by residues Arg92, Arg211, and 217–219; that span reads RIS. Glu230 lines the Mg(2+) pocket.

This sequence belongs to the UPP synthase family. As to quaternary structure, homodimer. The cofactor is Mg(2+).

It catalyses the reaction geranylgeranyl diphosphate + 7 isopentenyl diphosphate = tri-trans,hepta-cis-undecaprenyl diphosphate + 7 diphosphate. Functionally, catalyzes the sequential condensation of isopentenyl diphosphate (IPP) with geranylgeranyl diphosphate (GGPP) to yield (2Z,6Z,10Z,14Z,18Z,22Z,26Z,30E,34E,38E)-undecaprenyl diphosphate (tritrans,heptacis-UPP). It is probably the precursor of glycosyl carrier lipids. This Sulfurisphaera tokodaii (strain DSM 16993 / JCM 10545 / NBRC 100140 / 7) (Sulfolobus tokodaii) protein is Tritrans,polycis-undecaprenyl-diphosphate synthase (geranylgeranyl-diphosphate specific).